Consider the following 195-residue polypeptide: Probable GTP-binding protein EngB (195 aa).

Residues 24-195 (DWPEIALAGR…EAWEAILRYL (172 aa)) form the EngB-type G domain. GTP is bound by residues 32–39 (GRSNVGKS), 59–63 (GKTQL), 77–80 (DVPG), 144–147 (TKAD), and 176–178 (FSS). Residues S39 and T61 each contribute to the Mg(2+) site.

Belongs to the TRAFAC class TrmE-Era-EngA-EngB-Septin-like GTPase superfamily. EngB GTPase family. Mg(2+) serves as cofactor.

Its function is as follows. Necessary for normal cell division and for the maintenance of normal septation. This Lactococcus lactis subsp. lactis (strain IL1403) (Streptococcus lactis) protein is Probable GTP-binding protein EngB.